The primary structure comprises 558 residues: Putative cation/proton antiporter YbaL (558 aa).

The Periplasmic segment spans residues M1–H3. Residues A4–L24 form a helical membrane-spanning segment. The Cytoplasmic portion of the chain corresponds to A25–S31. A helical membrane pass occupies residues P32–A52. At D53–K55 the chain is on the periplasmic side. A helical transmembrane segment spans residues L56–F76. The Cytoplasmic segment spans residues S77–K85. A helical membrane pass occupies residues A86–L106. At S107 to W112 the chain is on the periplasmic side. Residues S113–L133 traverse the membrane as a helical segment. Topologically, residues R134–Q148 are cytoplasmic. A helical transmembrane segment spans residues I149–P169. The Periplasmic portion of the chain corresponds to A170–L185. Residues A186–V206 form a helical membrane-spanning segment. Topologically, residues G207 to E225 are cytoplasmic. Residues L226–F246 form a helical membrane-spanning segment. Position 247 (D247) is a topological domain, periplasmic. Residues V248 to H268 form a helical membrane-spanning segment. Over R269–D279 the chain is Cytoplasmic. The chain crosses the membrane as a helical span at residues A280–Q300. The Periplasmic segment spans residues Q301 to L303. A helical membrane pass occupies residues A304–V324. At R325–T336 the chain is on the cytoplasmic side. The helical transmembrane segment at I337–A357 threads the bilayer. At L358–N367 the chain is on the periplasmic side. A helical membrane pass occupies residues L368–E388. At K389–G558 the chain is on the cytoplasmic side. An RCK N-terminal domain is found at C417–M534. AMP is bound by residues R427–V428, E447–T448, N467–A468, E494, and R514.

The protein belongs to the monovalent cation:proton antiporter 2 (CPA2) transporter (TC 2.A.37) family.

Its subcellular location is the cell inner membrane. The sequence is that of Putative cation/proton antiporter YbaL (ybaL) from Escherichia coli (strain K12).